The sequence spans 102 residues: Small ribosomal subunit protein uS10 (102 aa).

Belongs to the universal ribosomal protein uS10 family. In terms of assembly, part of the 30S ribosomal subunit.

Involved in the binding of tRNA to the ribosomes. This chain is Small ribosomal subunit protein uS10, found in Thiobacillus denitrificans (strain ATCC 25259 / T1).